The chain runs to 108 residues: MSDTEYLARAEAVLAAVERTVDAANDGDHDIDLERNGSVLTLTFENGSKIIVNLQPPMKELWIAAKAGGFHYRFVDGEWRDTRTGTEFFSALTDYATQQAGLPITFRA.

The protein belongs to the frataxin family.

Involved in iron-sulfur (Fe-S) cluster assembly. May act as a regulator of Fe-S biogenesis. In Burkholderia vietnamiensis (strain G4 / LMG 22486) (Burkholderia cepacia (strain R1808)), this protein is Iron-sulfur cluster assembly protein CyaY.